The sequence spans 572 residues: MAELVQGQSAPVGMKAEGFVDALHRVRQIAAKIDSIPHLNNSTPLVDPSVYGYGVQKRPLDDGVGNQLGALVHQRTVITEEFKVPDKMVGFIIGRGGEQISRIQAESGCKIQIASESSGIPERPCVLTGTPESIEQAKRLLGQIVDRCRNGPGFHNDIDSNSTIQEILIPASKVGLVIGRGGETIKQLQERTGVKMVMIQDGPLPTGADKPLRITGDAFKVQQAREMVLEIIREKDQADFRGVRGDFNSRMGGGSIEVSVPRFAVGIVIGRNGEMIKKIQNDAGVRIQFKPDDGISPERAAQVMGPPDRCQHAAHIISELILTAQERDGFGGLAAARGRGRGRGDWSVGAPGGVQEITYTVPADKCGLVIGKGGENIKSINQQSGAHVELQRNPPPNSDPNLRRFTIRGVPQQIEVARQLIDEKVGGTNLGAPGAFGQSPFSQPPAPPHQNTFPPRSSGCFPNMAAKVNGNPHSTPVSGPPAFLTQGWGSTYQAWQQPTQQVPSQQSQPQSSQPNYSKAWEDYYKKQSHAASAAPQASSPPDYTMAWAEYYRQQVAFYGQTLGQAQAHSQEQ.

Ala2 carries the post-translational modification N-acetylalanine. Glycyl lysine isopeptide (Lys-Gly) (interchain with G-Cter in SUMO2) cross-links involve residues Lys15 and Lys57. Thr76 is modified (phosphothreonine). 4 KH domains span residues 77–141 (VITE…KRLL), 162–228 (STIQ…REMV), 253–317 (GGSI…AHII), and 354–421 (VQEI…RQLI). Residue Ser296 is modified to Phosphoserine. The disordered stretch occupies residues 426 to 521 (GGTNLGAPGA…SQPNYSKAWE (96 aa)). Residues 496 to 514 (QQPTQQVPSQQSQPQSSQP) are compositionally biased toward low complexity. Phosphoserine is present on residues Ser539 and Ser569.

In terms of tissue distribution, detected in a number of cell lines.

The protein localises to the nucleus. In terms of biological role, may interact with single-stranded DNA from the far-upstream element (FUSE). May activate gene expression. The protein is Far upstream element-binding protein 3 (FUBP3) of Homo sapiens (Human).